Here is a 302-residue protein sequence, read N- to C-terminus: Sulfate adenylyltransferase subunit 2 (302 aa).

Belongs to the PAPS reductase family. CysD subfamily. Heterodimer composed of CysD, the smaller subunit, and CysN.

It catalyses the reaction sulfate + ATP + H(+) = adenosine 5'-phosphosulfate + diphosphate. It functions in the pathway sulfur metabolism; hydrogen sulfide biosynthesis; sulfite from sulfate: step 1/3. Functionally, with CysN forms the ATP sulfurylase (ATPS) that catalyzes the adenylation of sulfate producing adenosine 5'-phosphosulfate (APS) and diphosphate, the first enzymatic step in sulfur assimilation pathway. APS synthesis involves the formation of a high-energy phosphoric-sulfuric acid anhydride bond driven by GTP hydrolysis by CysN coupled to ATP hydrolysis by CysD. The protein is Sulfate adenylyltransferase subunit 2 of Parabacteroides distasonis (strain ATCC 8503 / DSM 20701 / CIP 104284 / JCM 5825 / NCTC 11152).